Consider the following 291-residue polypeptide: Shikimate dehydrogenase (NADP(+)) (291 aa).

Shikimate is bound by residues 14–16 (SKS) and threonine 61. The Proton acceptor role is filled by lysine 65. Glutamate 77 lines the NADP(+) pocket. Asparagine 86 and aspartate 102 together coordinate shikimate. NADP(+) is bound by residues 139–143 (GAGGA), 164–169 (NRTFSR), and leucine 232. Tyrosine 234 lines the shikimate pocket. Residue glycine 256 participates in NADP(+) binding.

The protein belongs to the shikimate dehydrogenase family. As to quaternary structure, homodimer.

The catalysed reaction is shikimate + NADP(+) = 3-dehydroshikimate + NADPH + H(+). The protein operates within metabolic intermediate biosynthesis; chorismate biosynthesis; chorismate from D-erythrose 4-phosphate and phosphoenolpyruvate: step 4/7. Functionally, involved in the biosynthesis of the chorismate, which leads to the biosynthesis of aromatic amino acids. Catalyzes the reversible NADPH linked reduction of 3-dehydroshikimate (DHSA) to yield shikimate (SA). The chain is Shikimate dehydrogenase (NADP(+)) from Blochmanniella pennsylvanica (strain BPEN).